Here is a 374-residue protein sequence, read N- to C-terminus: uncharacterized protein (374 aa).

This is an uncharacterized protein from Methanocaldococcus jannaschii (strain ATCC 43067 / DSM 2661 / JAL-1 / JCM 10045 / NBRC 100440) (Methanococcus jannaschii).